Consider the following 513-residue polypeptide: t-SNARE domain-containing protein 1 (513 aa).

2 disordered regions span residues 1–23 and 49–128; these read MSYG…GPSR and ESKL…KPNF. Over residues 7–19 the composition is skewed to gly residues; it reads ARGGGLGSRGPFG. Residue serine 378 is modified to Phosphoserine. Residues 416–478 enclose the t-SNARE coiled-coil homology domain; the sequence is LEAIRLREEA…EAARQLLAGA (63 aa). Residues 491 to 511 traverse the membrane as a helical segment; the sequence is CFLSAGVTALLVIIIIIATSV.

The protein localises to the membrane. The protein is t-SNARE domain-containing protein 1 (TSNARE1) of Homo sapiens (Human).